Reading from the N-terminus, the 313-residue chain is Non-functional target of rapamycin complex subunit LST8-2 (313 aa).

7 WD repeats span residues 1-35 (MFEN…CYFS), 38-76 (YPDL…PHIP), 82-121 (SHTK…CQRE), 123-162 (RSVS…CSCE), 166-205 (EVGT…QTMT), 215-255 (AHNS…LEKV), and 258-297 (GHER…EEMV).

The protein belongs to the WD repeat LST8 family.

In terms of biological role, probable non-functional protein. The protein is Non-functional target of rapamycin complex subunit LST8-2 of Arabidopsis thaliana (Mouse-ear cress).